Consider the following 944-residue polypeptide: ATP-dependent RNA helicase DDX42 (944 aa).

Residues 1–18 are compositionally biased toward gly residues; the sequence is MNWNKGGPGTKRGFGFGG. 3 disordered regions span residues 1 to 119, 131 to 155, and 182 to 203; these read MNWN…LEAF, MKRL…EEED, and EYDS…LPPI. Residues 35–52 show a composition bias toward low complexity; it reads SHSAFGTAGSSAAFAKSG. The segment covering 70 to 84 has biased composition (acidic residues); sequence DEENAYFEDEEEDNS. The stretch at 120 to 157 forms a coiled coil; sequence MAEVEDQAARDMKRLEDKDKEKKNAKGIRDDIEEEDDQ. Over residues 131–149 the composition is skewed to basic and acidic residues; sequence MKRLEDKDKEKKNAKGIRD. Positions 253–281 match the Q motif motif; sequence SSFARFGFDEQLMHQIRKSEYTQPTPIQC. A Helicase ATP-binding domain is found at 284 to 459; that stretch reads VPVAMSGRDM…RDILIDPIRV (176 aa). Residue 297–304 participates in ATP binding; sequence AKTGSGKT. The DEAD box signature appears at 407 to 410; it reads DEAD. A Helicase C-terminal domain is found at 487–632; it reads WLTRRLVEFT…HVSKELLDLA (146 aa). Disordered stretches follow at residues 642–682, 723–753, and 794–944; these read RFKG…VMSN, GSSA…AANP, and SANA…RWDS. Low complexity predominate over residues 723 to 737; that stretch reads GSSAAGASGWTSAGS. Residues 738–752 show a composition bias toward polar residues; it reads LNSVPTSSAQQNAAN. A compositionally biased stretch (low complexity) spans 794-814; that stretch reads SANASAGNREGVGSAGSAPRG. Over residues 815–824 the composition is skewed to gly residues; the sequence is GSSGGGGGGI. Composition is skewed to basic and acidic residues over residues 825–887 and 901–926; these read VRER…RHFT and NISE…DNKT.

Belongs to the DEAD box helicase family. DDX42 subfamily. In terms of assembly, transient component of the SF3B subcomplex of the 17S U2 SnRNP complex.

Its subcellular location is the cytoplasm. It localises to the nucleus. It catalyses the reaction ATP + H2O = ADP + phosphate + H(+). ATP-dependent RNA helicase that binds to partially double-stranded RNAs (dsRNAs) in order to unwind RNA secondary structures. Unwinding is promoted in the presence of single-strand binding proteins. Also mediates RNA duplex formation thereby displacing the single-strand RNA binding protein. ATP and ADP modulate its activity: ATP binding and hydrolysis by DDX42 triggers RNA strand separation, whereas the ADP-bound form of the protein triggers annealing of complementary RNA strands. Required for assembly of the 17S U2 SnRNP complex of the spliceosome, a large ribonucleoprotein complex that removes introns from transcribed pre-mRNAs: DDX42 associates transiently with the SF3B subcomplex of the 17S U2 SnRNP complex and is released after fulfilling its role in the assembly of 17S U2 SnRNP. This is ATP-dependent RNA helicase DDX42 (DDX42) from Gallus gallus (Chicken).